The primary structure comprises 438 residues: GTPase Der (438 aa).

EngA-type G domains follow at residues 2–164 and 173–343; these read HKVA…PEDD and IRIS…EKWQ. GTP contacts are provided by residues 8 to 15, 55 to 59, 116 to 119, 179 to 186, 226 to 230, and 288 to 291; these read GRPNVGKS, DTGGL, NKID, DTAGI, and NKWD. Residues 344–428 form the KH-like domain; that stretch reads SRIGTSELNR…PVRLKWKEKG (85 aa).

The protein belongs to the TRAFAC class TrmE-Era-EngA-EngB-Septin-like GTPase superfamily. EngA (Der) GTPase family. In terms of assembly, associates with the 50S ribosomal subunit.

In terms of biological role, GTPase that plays an essential role in the late steps of ribosome biogenesis. This is GTPase Der from Deinococcus radiodurans (strain ATCC 13939 / DSM 20539 / JCM 16871 / CCUG 27074 / LMG 4051 / NBRC 15346 / NCIMB 9279 / VKM B-1422 / R1).